The following is a 407-amino-acid chain: S-adenosylmethionine synthase (407 aa).

Residue H15 coordinates ATP. D17 provides a ligand contact to Mg(2+). E43 provides a ligand contact to K(+). L-methionine is bound by residues E56 and Q99. The segment at 99–109 is flexible loop; the sequence is QSPDIARGVDT. The tract at residues 112 to 131 is disordered; that stretch reads ERRGGGTAPGGPGDELDRQG. ATP contacts are provided by residues 179–181, 252–253, D261, 267–268, A284, and K288; these read DGK, RF, and RK. Residue D261 participates in L-methionine binding. Residue K292 coordinates L-methionine.

Belongs to the AdoMet synthase family. Homotetramer; dimer of dimers. Requires Mg(2+) as cofactor. K(+) serves as cofactor.

Its subcellular location is the cytoplasm. The catalysed reaction is L-methionine + ATP + H2O = S-adenosyl-L-methionine + phosphate + diphosphate. Its pathway is amino-acid biosynthesis; S-adenosyl-L-methionine biosynthesis; S-adenosyl-L-methionine from L-methionine: step 1/1. Its function is as follows. Catalyzes the formation of S-adenosylmethionine (AdoMet) from methionine and ATP. The overall synthetic reaction is composed of two sequential steps, AdoMet formation and the subsequent tripolyphosphate hydrolysis which occurs prior to release of AdoMet from the enzyme. In Streptomyces fradiae (Streptomyces roseoflavus), this protein is S-adenosylmethionine synthase.